The chain runs to 556 residues: Beta-hexosaminidase subunit beta (556 aa).

The N-terminal stretch at 1-42 (MELCGLGLPRPPMLLALLLATLLAAMLALLTQVALVVQVAEA) is a signal peptide. Residues 43-121 (ARAPSVSAKP…HHEPAEFQAK (79 aa)) constitute a propeptide that is removed on maturation. Asn-84 is a glycosylation site (N-linked (GlcNAc...) asparagine). Cys-91 and Cys-137 form a disulfide bridge. N-linked (GlcNAc...) asparagine glycosylation is found at Asn-142, Asn-190, and Asn-327. Disulfide bonds link Cys-309–Cys-360 and Cys-534–Cys-551. The active-site Proton donor is Glu-355.

The protein belongs to the glycosyl hydrolase 20 family. There are 3 forms of beta-hexosaminidase: hexosaminidase A is a heterodimer composed of one subunit alpha and one subunit beta (chain A and B); hexosaminidase B is a homodimer of two beta subunits (two chains A and B); hexosaminidase S is a homodimer of two alpha subunits. The composition of the dimer (isozyme A versus isozyme S) has a significant effect on the substrate specificity of the alpha subunit active site. In terms of processing, N-linked glycans at Asn-142 and Asn-190 consist of Man(3)-GlcNAc(2) and Man(5 to 7)-GlcNAc(2), respectively. Post-translationally, the beta-A and beta-B chains are produced by proteolytic processing of the precursor beta chain.

It localises to the lysosome. Its subcellular location is the cytoplasmic vesicle. It is found in the secretory vesicle. The protein localises to the cortical granule. The enzyme catalyses Hydrolysis of terminal non-reducing N-acetyl-D-hexosamine residues in N-acetyl-beta-D-hexosaminides.. It carries out the reaction N-acetyl-beta-D-galactosaminyl-(1-&gt;4)-beta-D-3-sulfogalactosyl-(1-&gt;4)-beta-D-glucosyl-(1&lt;-&gt;1')-ceramide + H2O = a beta-D-3-sulfogalactosyl-(1-&gt;4)-beta-D-glucosyl-(1&lt;-&gt;1')-ceramide + N-acetyl-beta-D-galactosamine. It catalyses the reaction a ganglioside GM2 (d18:1(4E)) + H2O = a ganglioside GM3 (d18:1(4E)) + N-acetyl-beta-D-galactosamine. The catalysed reaction is a ganglioside GM2 + H2O = a ganglioside GM3 + N-acetyl-beta-D-galactosamine. The enzyme catalyses beta-D-GalNAc-(1-&gt;4)-alpha-L-IdoA-(1-&gt;3)-beta-D-GalNAc-4-sulfate-(1-&gt;4)-alpha-L-IdoA-(1-&gt;3)-D-GalNAc-4-sulfate + H2O = alpha-L-IdoA-(1-&gt;3)-beta-D-GalNAc-4-sulfate-(1-&gt;4)-alpha-L-IdoA-(1-&gt;3)-D-GalNAc-4-sulfate + N-acetyl-D-galactosamine. It carries out the reaction N-acetyl-beta-D-6-sulfogalactosaminyl-(1-&gt;4)-alpha-L-iduronyl-(1-&gt;3)-N-acetyl-D-6-sulfogalactosamine + H2O = alpha-L-iduronyl-(1-&gt;3)-N-acetyl-D-6-sulfogalactosamine + N-acetyl-D-6-sulfogalactosamine. With respect to regulation, addition of GM2A stimulates the hydrolysis of sulfated glycosphingolipid SM2 and the ganglioside GM2. Functionally, hydrolyzes the non-reducing end N-acetyl-D-hexosamine and/or sulfated N-acetyl-D-hexosamine of glycoconjugates, such as the oligosaccharide moieties from proteins and neutral glycolipids, or from certain mucopolysaccharides. The isozyme B does not hydrolyze each of these substrates, however hydrolyzes efficiently neutral oligosaccharide. Only the isozyme A is responsible for the degradation of GM2 gangliosides in the presence of GM2A. During fertilization is responsible, at least in part, for the zona block to polyspermy. Present in the cortical granules of non-activated oocytes, is exocytosed during the cortical reaction in response to oocyte activation and inactivates the sperm galactosyltransferase-binding site, accounting for the block in sperm binding to the zona pellucida. The protein is Beta-hexosaminidase subunit beta of Homo sapiens (Human).